Consider the following 154-residue polypeptide: Protein X (154 aa).

A mitochondrial targeting sequence region spans residues 68–117 (PCALRFTSARYMETAMNTSHHLPRQLYKWTLGLFVMSTTGVEKYFKDCVF).

This sequence belongs to the orthohepadnavirus protein X family. May form homodimer. May interact with host CEBPA, CFLAR, CREB1, DDB1, E4F1, HBXIP, HSPD1/HSP60, NFKBIA, POLR2E and SMAD4. Interacts with host SMC5-SMC6 complex and induces its degradation. Interacts with host TRPC4AP; leading to prevent ubiquitination of TRPC4AP. Interacts with host PLSCR1; this interaction promotes ubiquitination and degradation of HBx and impairs HBx-mediated cell proliferation. In terms of processing, a fraction may be phosphorylated in insect cells and HepG2 cells, a human hepatoblastoma cell line. Phosphorylated in vitro by host protein kinase C or mitogen-activated protein kinase. N-acetylated in insect cells.

The protein resides in the host cytoplasm. It is found in the host nucleus. Its subcellular location is the host mitochondrion. Multifunctional protein that plays a role in silencing host antiviral defenses and promoting viral transcription. Does not seem to be essential for HBV infection. May be directly involved in development of cirrhosis and liver cancer (hepatocellular carcinoma). Most of cytosolic activities involve modulation of cytosolic calcium. The effect on apoptosis is controversial depending on the cell types in which the studies have been conducted. May induce apoptosis by localizing in mitochondria and causing loss of mitochondrial membrane potential. May also modulate apoptosis by binding host CFLAR, a key regulator of the death-inducing signaling complex (DISC). Promotes viral transcription by using the host E3 ubiquitin ligase DDB1 to target the SMC5-SMC6 complex to proteasomal degradation. This host complex would otherwise bind to viral episomal DNA, and prevents its transcription. Moderately stimulates transcription of many different viral and cellular transcription elements. Promoters and enhancers stimulated by HBx contain DNA binding sites for NF-kappa-B, AP-1, AP-2, c-EBP, ATF/CREB, or the calcium-activated factor NF-AT. This Hepatitis B virus genotype G (isolate IG29227/2000) (HBV-G) protein is Protein X.